Here is a 434-residue protein sequence, read N- to C-terminus: Asparagine--tRNA ligase (434 aa).

This sequence belongs to the class-II aminoacyl-tRNA synthetase family.

The protein localises to the cytoplasm. The enzyme catalyses tRNA(Asn) + L-asparagine + ATP = L-asparaginyl-tRNA(Asn) + AMP + diphosphate + H(+). The protein is Asparagine--tRNA ligase of Pyrococcus horikoshii (strain ATCC 700860 / DSM 12428 / JCM 9974 / NBRC 100139 / OT-3).